A 222-amino-acid chain; its full sequence is Probable nicotinate-nucleotide adenylyltransferase (222 aa).

It belongs to the NadD family.

The enzyme catalyses nicotinate beta-D-ribonucleotide + ATP + H(+) = deamido-NAD(+) + diphosphate. Its pathway is cofactor biosynthesis; NAD(+) biosynthesis; deamido-NAD(+) from nicotinate D-ribonucleotide: step 1/1. Its function is as follows. Catalyzes the reversible adenylation of nicotinate mononucleotide (NaMN) to nicotinic acid adenine dinucleotide (NaAD). The polypeptide is Probable nicotinate-nucleotide adenylyltransferase (Stenotrophomonas maltophilia (strain K279a)).